Consider the following 593-residue polypeptide: Aspartate--tRNA ligase (593 aa).

Residue Glu173 participates in L-aspartate binding. Residues 197–200 (QLFK) form an aspartate region. An L-aspartate-binding site is contributed by Arg219. Residues 219 to 221 (RDE) and Gln228 contribute to the ATP site. His448 contacts L-aspartate. Glu482 contributes to the ATP binding site. Arg489 serves as a coordination point for L-aspartate. Residue 534 to 537 (GLDR) coordinates ATP.

It belongs to the class-II aminoacyl-tRNA synthetase family. Type 1 subfamily. In terms of assembly, homodimer.

It localises to the cytoplasm. The enzyme catalyses tRNA(Asp) + L-aspartate + ATP = L-aspartyl-tRNA(Asp) + AMP + diphosphate. Functionally, catalyzes the attachment of L-aspartate to tRNA(Asp) in a two-step reaction: L-aspartate is first activated by ATP to form Asp-AMP and then transferred to the acceptor end of tRNA(Asp). The chain is Aspartate--tRNA ligase from Shewanella denitrificans (strain OS217 / ATCC BAA-1090 / DSM 15013).